Here is a 316-residue protein sequence, read N- to C-terminus: Protoheme IX farnesyltransferase 2 (316 aa).

The segment covering 1–15 (MEQNLNSEQKPQSSA) has biased composition (polar residues). The tract at residues 1–24 (MEQNLNSEQKPQSSAKPRGKSSRS) is disordered. The next 7 helical transmembrane spans lie at 62-82 (IPEM…AGAF), 117-137 (IVML…AAAF), 163-183 (IGSI…STDI), 188-208 (IARF…AIAI), 231-251 (TYYQ…LFGS), 252-272 (LSVG…VMSI), and 293-313 (LFHM…GVIF).

The protein belongs to the UbiA prenyltransferase family. Protoheme IX farnesyltransferase subfamily. Interacts with CtaA.

It is found in the cell membrane. The catalysed reaction is heme b + (2E,6E)-farnesyl diphosphate + H2O = Fe(II)-heme o + diphosphate. Its pathway is porphyrin-containing compound metabolism; heme O biosynthesis; heme O from protoheme: step 1/1. In terms of biological role, converts heme B (protoheme IX) to heme O by substitution of the vinyl group on carbon 2 of heme B porphyrin ring with a hydroxyethyl farnesyl side group. This Lysinibacillus sphaericus (strain C3-41) protein is Protoheme IX farnesyltransferase 2.